The sequence spans 89 residues: Small ribosomal subunit protein uS15 (89 aa).

The protein belongs to the universal ribosomal protein uS15 family. Part of the 30S ribosomal subunit. Forms a bridge to the 50S subunit in the 70S ribosome, contacting the 23S rRNA.

In terms of biological role, one of the primary rRNA binding proteins, it binds directly to 16S rRNA where it helps nucleate assembly of the platform of the 30S subunit by binding and bridging several RNA helices of the 16S rRNA. Its function is as follows. Forms an intersubunit bridge (bridge B4) with the 23S rRNA of the 50S subunit in the ribosome. This chain is Small ribosomal subunit protein uS15, found in Thermodesulfovibrio yellowstonii (strain ATCC 51303 / DSM 11347 / YP87).